The following is a 263-amino-acid chain: Aquaporin Lacbi1:247946 (263 aa).

Topologically, residues 1-18 (MKLTISHHKCAIRKVMAE) are cytoplasmic. The helical transmembrane segment at 19–39 (FVGVALLVIFGAGTACQVVLS) threads the bilayer. Topologically, residues 40–45 (TNPSSF) are extracellular. Residues 46–66 (LSINFGWAIGIATGAWVSAGI) form a helical membrane-spanning segment. The Cytoplasmic portion of the chain corresponds to 67-89 (SGGHINPAITIAMATYRGFPWRE). Residues 72–74 (NPA) carry the NPA 1 motif. A helical transmembrane segment spans residues 90 to 110 (VPGYIFAQALGGFVGAALVYA). The Extracellular portion of the chain corresponds to 111 to 143 (NYFHAIDIFEGGHIRTQATASLFATFALPYMTQ). Residues 144 to 164 (ASCFFSEFLATAVLFIVFLAL) traverse the membrane as a helical segment. Residues 165 to 169 (NDKHN) are Cytoplasmic-facing. A helical membrane pass occupies residues 170–190 (GALTNGLLPFALFILFIGLGA). The Extracellular portion of the chain corresponds to 191-227 (SLGMQTGYAVNPARDFGPRLFLAMAGYGKAVFNYRRQ). Residues 201–203 (NPA) carry the NPA 2 motif. A helical membrane pass occupies residues 228 to 248 (YWIWAPIIAPILGAQAGGLLY). Over 249–263 (DTSIYNGDDSPIKWR) the chain is Cytoplasmic.

This sequence belongs to the MIP/aquaporin (TC 1.A.8) family.

Its subcellular location is the membrane. The catalysed reaction is H2O(in) = H2O(out). Its function is as follows. Water channel required to facilitate the transport of water across membranes. Shows low but significant water conductivity, but no glycerol nor ammonium transport activities. In Laccaria bicolor (strain S238N-H82 / ATCC MYA-4686) (Bicoloured deceiver), this protein is Aquaporin Lacbi1:247946.